Consider the following 283-residue polypeptide: PTS system mannose-specific EIID component (283 aa).

Methionine 1 carries the N-formylmethionine modification. Residues methionine 1–threonine 14 are Cytoplasmic-facing. The 271-residue stretch at lysine 11–leucine 281 folds into the PTS EIID domain. Residues glutamine 15–arginine 52 lie within the membrane without spanning it. Over leucine 53–glutamate 59 the chain is Cytoplasmic. The stretch at alanine 60–glutamine 92 is an intramembrane region. The Cytoplasmic segment spans residues arginine 93–aspartate 100. Residues aspartate 101–methionine 140 are membrane-embedded. The Periplasmic portion of the chain corresponds to serine 141–leucine 144. Positions leucine 145–glycine 173 form a transmembrane segment. Over isoleucine 174–glycine 183 the chain is Cytoplasmic. Residues phenylalanine 184 to histidine 209 are membrane-embedded. Residues valine 210–glycine 241 lie on the Periplasmic side of the membrane. Positions leucine 242–leucine 255 form a transmembrane segment. Over arginine 256–proline 261 the chain is Cytoplasmic. A transmembrane helix spans residues leucine 262 to leucine 280. Over leucine 281 to leucine 283 the chain is Periplasmic.

Homotrimer of protomers that are composed of two subunits, IIC and IID.

Its subcellular location is the cell inner membrane. Functionally, the phosphoenolpyruvate-dependent sugar phosphotransferase system (sugar PTS), a major carbohydrate active transport system, catalyzes the phosphorylation of incoming sugar substrates concomitantly with their translocation across the cell membrane. The enzyme II ManXYZ PTS system is involved in mannose transport. This chain is PTS system mannose-specific EIID component (manZ), found in Escherichia coli O157:H7.